A 380-amino-acid polypeptide reads, in one-letter code: Cytochrome b (380 aa).

The next 4 membrane-spanning stretches (helical) occupy residues 34–54, 78–99, 114–134, and 179–199; these read FGSL…LLAM, WLIR…YLHI, WNTG…GYVL, and FFAL…IHLT. H84 and H98 together coordinate heme b. Residues H183 and H197 each coordinate heme b. Residue H202 coordinates a ubiquinone. 4 helical membrane passes run 227-247, 289-309, 321-341, and 348-368; these read LKDI…ALFS, LGGV…PFLH, LSQL…WVGS, and FIII…ILFP.

This sequence belongs to the cytochrome b family. In terms of assembly, the cytochrome bc1 complex contains 11 subunits: 3 respiratory subunits (MT-CYB, CYC1 and UQCRFS1), 2 core proteins (UQCRC1 and UQCRC2) and 6 low-molecular weight proteins (UQCRH/QCR6, UQCRB/QCR7, UQCRQ/QCR8, UQCR10/QCR9, UQCR11/QCR10 and a cleavage product of UQCRFS1). This cytochrome bc1 complex then forms a dimer. It depends on heme b as a cofactor.

It is found in the mitochondrion inner membrane. Functionally, component of the ubiquinol-cytochrome c reductase complex (complex III or cytochrome b-c1 complex) that is part of the mitochondrial respiratory chain. The b-c1 complex mediates electron transfer from ubiquinol to cytochrome c. Contributes to the generation of a proton gradient across the mitochondrial membrane that is then used for ATP synthesis. The chain is Cytochrome b (MT-CYB) from Macronectes giganteus (Southern giant petrel).